A 447-amino-acid polypeptide reads, in one-letter code: ATP-dependent protease ATPase subunit HslU (447 aa).

Residues I18, 60 to 65 (GVGKTE), D259, E325, and R397 contribute to the ATP site.

It belongs to the ClpX chaperone family. HslU subfamily. As to quaternary structure, a double ring-shaped homohexamer of HslV is capped on each side by a ring-shaped HslU homohexamer. The assembly of the HslU/HslV complex is dependent on binding of ATP.

The protein resides in the cytoplasm. In terms of biological role, ATPase subunit of a proteasome-like degradation complex; this subunit has chaperone activity. The binding of ATP and its subsequent hydrolysis by HslU are essential for unfolding of protein substrates subsequently hydrolyzed by HslV. HslU recognizes the N-terminal part of its protein substrates and unfolds these before they are guided to HslV for hydrolysis. This chain is ATP-dependent protease ATPase subunit HslU, found in Burkholderia thailandensis (strain ATCC 700388 / DSM 13276 / CCUG 48851 / CIP 106301 / E264).